The primary structure comprises 253 residues: Flap endonuclease Xni (253 aa).

Asp104 is a binding site for Mg(2+). The 5'-3' exonuclease domain maps to 160–250 (VAPQQLTDFW…HGNLQQLRLN (91 aa)). Positions 171, 172, 180, 182, and 185 each coordinate K(+). The tract at residues 184–189 (GIGAKT) is interaction with DNA.

The protein belongs to the Xni family. Mg(2+) serves as cofactor. It depends on K(+) as a cofactor.

In terms of biological role, has flap endonuclease activity. During DNA replication, flap endonucleases cleave the 5'-overhanging flap structure that is generated by displacement synthesis when DNA polymerase encounters the 5'-end of a downstream Okazaki fragment. The polypeptide is Flap endonuclease Xni (Edwardsiella ictaluri (strain 93-146)).